The chain runs to 83 residues: Bublin coiled-coil protein (83 aa).

The tract at residues 1–25 is disordered; that stretch reads MSGPNGDLGTPVEAGAEGEEDGFGE. The stretch at 25–74 forms a coiled coil; the sequence is EAEYAAINSMLDQINSCLDHLEEKNDHLHARLQELLESNRQTRLEFQQQL. Ser82 carries the phosphoserine modification.

It belongs to the UPF0184 (EST00098) family.

The protein resides in the cell junction. The protein localises to the cytoplasm. It localises to the cytoskeleton. Functionally, essential for intermediate filament organization in intestinal cells, interacts with intermediate filament and regulates intestinal lumen morphology. This chain is Bublin coiled-coil protein (BBLN), found in Bos taurus (Bovine).